The primary structure comprises 229 residues: Ribulose-phosphate 3-epimerase (229 aa).

Ser-13 lines the substrate pocket. A divalent metal cation contacts are provided by His-36, Asp-38, and His-69. The active-site Proton acceptor is the Asp-38. Residues His-69, 145–148 (GFGG), 178–180 (DGG), and 200–201 (GS) each bind substrate. Residue Asp-178 participates in a divalent metal cation binding. The Proton donor role is filled by Asp-178.

Belongs to the ribulose-phosphate 3-epimerase family. Requires a divalent metal cation as cofactor.

It catalyses the reaction D-ribulose 5-phosphate = D-xylulose 5-phosphate. Its pathway is carbohydrate degradation. Catalyzes the reversible epimerization of D-ribulose 5-phosphate to D-xylulose 5-phosphate. In Mycobacterium bovis (strain ATCC BAA-935 / AF2122/97), this protein is Ribulose-phosphate 3-epimerase.